Consider the following 364-residue polypeptide: Probable zinc transporter 10 (364 aa).

Residues 1-28 (MTKSHVIFSASIALFLLLSISHFPGALS) form the signal peptide. Residues 29–52 (QSNKDCQSKSNYSCIDKNKALDLK) are Extracellular-facing. Residues 53 to 73 (LLSIFSILITSLIGVCLPFFA) form a helical membrane-spanning segment. Residues 74–85 (RSIPAFQPEKSH) lie on the Cytoplasmic side of the membrane. The chain crosses the membrane as a helical span at residues 86–106 (FLIVKSFASGIILSTGFMHVL). The Extracellular portion of the chain corresponds to 107–125 (PDSFEMLSSPCLNDNPWHK). The chain crosses the membrane as a helical span at residues 126–146 (FPFAGFVAMMSAVFTLMVDSI). The Cytoplasmic segment spans residues 147-209 (TTSVFTKSGR…GSYLQLLRYR (63 aa)). Residues 210–230 (ILAIVLELGIVVQSIVIGLSV) traverse the membrane as a helical segment. The Extracellular segment spans residues 231 to 241 (GDTNNTCTIKG). The helical transmembrane segment at 242–262 (LVAALCFHQMFEGMGLGGCIL) threads the bilayer. The Cytoplasmic portion of the chain corresponds to 263 to 271 (QAEYGWVKK). A helical transmembrane segment spans residues 272 to 292 (AVMAFFFAVTTPFGVVLGMAL). The Extracellular portion of the chain corresponds to 293 to 303 (SKTYKENSPES). The helical transmembrane segment at 304 to 324 (LITVGLLNASSAGLLIYMALV) threads the bilayer. Residues 325 to 343 (DLLAADFMGQKMQRSIKLQ) are Cytoplasmic-facing. The helical transmembrane segment at 344 to 364 (LKSYAAVLLGAGGMSVMAKWA) threads the bilayer.

Belongs to the ZIP transporter (TC 2.A.5) family.

The protein resides in the cell membrane. Probably mediates zinc uptake from the rhizosphere. The chain is Probable zinc transporter 10 (ZIP10) from Arabidopsis thaliana (Mouse-ear cress).